The chain runs to 779 residues: Probable ATP-dependent RNA helicase DHX40 (779 aa).

The disordered stretch occupies residues 1 to 53 (MSRFPAVAGRAPRRQEEGERSRDLQEERPSAVCIADREEKGCTSQEGGTTPTF). The span at 13 to 41 (RRQEEGERSRDLQEERPSAVCIADREEKG) shows a compositional bias: basic and acidic residues. A compositionally biased stretch (polar residues) spans 42-53 (CTSQEGGTTPTF). The Helicase ATP-binding domain maps to 63–231 (IQAVRDNSFL…FGNCPIFDIP (169 aa)). Residue 76–83 (GNTGSGKT) participates in ATP binding. The DEAH box motif lies at 173-176 (DEAH). The 180-residue stretch at 263–442 (TMDIHLNEMA…SVVLTLKCLA (180 aa)) folds into the Helicase C-terminal domain. The interval 737 to 779 (SKDVLKKMQRRNDDKSISDARARFLERKQQRTQDHSDTRKETG) is disordered.

Belongs to the DEAD box helicase family. DEAH subfamily.

The catalysed reaction is ATP + H2O = ADP + phosphate + H(+). Probable ATP-dependent RNA helicase. This Pongo abelii (Sumatran orangutan) protein is Probable ATP-dependent RNA helicase DHX40 (DHX40).